The following is a 262-amino-acid chain: Endoplasmic reticulum chaperone BiP (262 aa).

8–11 (GSTR) is a binding site for ATP. Positions 53–63 (QDTGDLVLLDV) are interdomain linker. Residues 64–144 (CPLTLGIETV…PRGVPQIEVT (81 aa)) are substrate-binding (SBD). N6-succinyllysine is present on K91. R136 bears the Omega-N-methylarginine mark. The residue at position 162 (T162) is an O-AMP-threonine; alternate. T162 carries the phosphothreonine; alternate modification. K229 carries the post-translational modification N6,N6,N6-trimethyllysine; by METTL21A; in vitro. K229 is modified (N6,N6-dimethyllysine; alternate). At K229 the chain carries N6-methyllysine; alternate. K235 is subject to N6-methyllysine.

Belongs to the heat shock protein 70 family. In terms of assembly, monomer and homooligomer; homooligomerization via the interdomain linker inactivates the chaperone activity and acts as a storage of HSPA5/BiP molecules. Interacts with DNAJC1 (via J domain). Component of an EIF2 complex at least composed of CELF1/CUGBP1, CALR, CALR3, EIF2S1, EIF2S2, HSP90B1 and HSPA5. Part of a large chaperone multiprotein complex comprising DNAJB11, HSP90B1, HSPA5, HYOU, PDIA2, PDIA4, PDIA6, PPIB, SDF2L1, UGGT1 and very small amounts of ERP29, but not, or at very low levels, CALR nor CANX. Interacts with TMEM132A and TRIM21. May form a complex with ERLEC1, OS9, SEL1L and SYVN1. Interacts with DNAJC10. Interacts with DNAJB9/ERdj4; leading to recruit HSPA5/BiP to ERN1/IRE1. Interacts with ERN1/IRE1 (via luminal domain); the interaction takes place following interaction with DNAJB9/ERdj4 and leads to inactivate ERN1/IRE1, the interaction also competitively inhibits ERN1 interaction with MANF. Interacts directly with MANF (via SAP domain); the interaction inhibits ATP binding to HSPA5/BiP and subsequent nucleotide exchange. Interacts with EIF2AK3/PERK (via luminal domain); interaction leads to inactivate EIF2AK3/PERK. Interacts with MX1. Interacts with METTL23. Interacts with CEMIP; the interaction induces calcium leakage from the endoplasmic reticulum and cell migration. Interacts with PCSK4 form; the interaction takes place in the endoplasmic reticulum. Interacts with CIPC. Interacts with CCDC88B (via C-terminus); the interaction opposes ERN1-mediated JNK activation, protecting against apoptosis. Interacts with INPP5K; necessary for INPP5K localization at the endoplasmic reticulum. Interacts with MANF; the interaction is direct. Interacts with LOXL2; leading to activate the ERN1/IRE1-XBP1 pathway of the unfolded protein response. Interacts with CLU under stressed condition; interaction increases CLU protein stability; facilitates its retrotranslocation and redistribution to the mitochondria; cooperatively suppress stress-induced apoptosis by stabilizing mitochondrial membrane integrity. Interacts with CCDC47. Interacts with CLN3. Interacts with ELAPOR1; may regulate the function of HSPA5 in apoptosis and cell proliferation. Interacts with CASP7. Interacts with ILDR2; the interaction stabilizes ILDR2 expression. Interacts with ADAM7. Post-translationally, in unstressed cells, AMPylation at Thr-162 by FICD inactivates the chaperome activity: AMPylated form is locked in a relatively inert state and only weakly stimulated by J domain-containing proteins. In response to endoplasmic reticulum stress, de-AMPylation by the same protein, FICD, restores the chaperone activity.

It is found in the endoplasmic reticulum lumen. It localises to the melanosome. Its subcellular location is the cytoplasm. The protein resides in the cell surface. The catalysed reaction is ATP + H2O = ADP + phosphate + H(+). The chaperone activity is regulated by ATP-induced allosteric coupling of the nucleotide-binding (NBD) and substrate-binding (SBD) domains. In the ADP-bound and nucleotide-free (apo) states, the two domains have little interaction. In contrast, in the ATP-bound state the two domains are tightly coupled, which results in drastically accelerated kinetics in both binding and release of polypeptide substrates. J domain-containing co-chaperones (DNAJB9/ERdj4 or DNAJC10/ERdj5) stimulate the ATPase activity and are required for efficient substrate recognition by HSPA5/BiP. Homooligomerization inactivates participating HSPA5/BiP protomers and probably act as reservoirs to store HSPA5/BiP molecules when they are not needed by the cell. Endoplasmic reticulum chaperone that plays a key role in protein folding and quality control in the endoplasmic reticulum lumen. Involved in the correct folding of proteins and degradation of misfolded proteins via its interaction with DNAJC10/ERdj5, probably to facilitate the release of DNAJC10/ERdj5 from its substrate. Acts as a key repressor of the EIF2AK3/PERK and ERN1/IRE1-mediated unfolded protein response (UPR). In the unstressed endoplasmic reticulum, recruited by DNAJB9/ERdj4 to the luminal region of ERN1/IRE1, leading to disrupt the dimerization of ERN1/IRE1, thereby inactivating ERN1/IRE1. Also binds and inactivates EIF2AK3/PERK in unstressed cells. Accumulation of misfolded protein in the endoplasmic reticulum causes release of HSPA5/BiP from ERN1/IRE1 and EIF2AK3/PERK, allowing their homodimerization and subsequent activation. Plays an auxiliary role in post-translational transport of small presecretory proteins across endoplasmic reticulum (ER). May function as an allosteric modulator for SEC61 channel-forming translocon complex, likely cooperating with SEC62 to enable the productive insertion of these precursors into SEC61 channel. Appears to specifically regulate translocation of precursors having inhibitory residues in their mature region that weaken channel gating. May also play a role in apoptosis and cell proliferation. This is Endoplasmic reticulum chaperone BiP from Sus scrofa (Pig).